The following is a 125-amino-acid chain: Protein ApaG (125 aa).

Residues 1 to 125 form the ApaG domain; it reads MINSPRVCIQ…FRLAVPTLIH (125 aa).

In Citrobacter koseri (strain ATCC BAA-895 / CDC 4225-83 / SGSC4696), this protein is Protein ApaG.